Consider the following 395-residue polypeptide: Leukosialin (395 aa).

A signal peptide spans 1–19 (MALHLLLLFGACWVQVASP). The Extracellular segment spans residues 20–248 (DSLQRTTMLP…TRSPSQESSG (229 aa)). The span at 27–56 (MLPSTPHITAPSTSEAQNASPSVSVGSGTV) shows a compositional bias: polar residues. The interval 27–245 (MLPSTPHITA…PITTRSPSQE (219 aa)) is disordered. The span at 73 to 88 (SLTPLETTELSSLETS) shows a compositional bias: low complexity. 2 stretches are compositionally biased toward polar residues: residues 89–111 (AGASMSTPVPEPTASQEVSSKTS) and 145–154 (TAASTSISKG). Over residues 155-166 (TSAPPTTVTTSS) the composition is skewed to low complexity. N-linked (GlcNAc...) asparagine glycosylation is present at N167. The span at 167–196 (NETSGPSVATTVSSKTSGPPVTTATGSLGP) shows a compositional bias: polar residues. Over residues 205–241 (ATTATSSVESSSVARGTSVSSRKTSTTSTQDPITTRS) the composition is skewed to low complexity. A helical membrane pass occupies residues 249–271 (MLLVPMLIALVVVLALVALLLLW). Residues 272 to 302 (RQRQKRRTGALTLSGGGKRNGVVDAWAGPAR) are required for interaction with EZR, MSN and RDX and for co-localization to microvilli. At 272–395 (RQRQKRRTGA…AKDEAAPQSL (124 aa)) the chain is on the cytoplasmic side. Residues 276–290 (KRRTGALTLSGGGKR) carry the Nuclear localization signal motif. S285 and S328 each carry phosphoserine. The disordered stretch occupies residues 303-395 (VPDEEATTTS…AKDEAAPQSL (93 aa)). The segment covering 327-338 (GSGQRPTLTTFF) has biased composition (polar residues). Residue T333 is modified to Phosphothreonine. Phosphoserine occurs at positions 339 and 343. S347 bears the Phosphoserine; by PKC/PRKCQ mark. A Phosphoserine modification is found at S371. T378 carries the phosphothreonine modification. The span at 385-395 (QAKDEAAPQSL) shows a compositional bias: basic and acidic residues.

Interacts with SIGLEC1. In terms of assembly, interacts with isoform 2 of HIPK2. Interacts with CTNNB1. Interacts with RDX (via FERM domain). Interacts with EZR. Interacts with MSN. In terms of processing, phosphorylation at Ser-347 is regulated by chemokines, requires its association with ERM proteins (EZR, RDX and MSN) and is essential for its function in the regulation of T-cell trafficking to lymph nodes. Post-translationally, has a high content of sialic acid and O-linked carbohydrate structures. Cleavage by CTSG releases its extracellular domain and triggers its intramembrane proteolysis by gamma-secretase releasing the CD43 cytoplasmic tail chain (CD43-ct) which translocates to the nucleus. In terms of processing, sumoylated. Cell surface of thymocytes, T-lymphocytes, neutrophils, plasma cells and myelomas.

The protein resides in the membrane. It is found in the cell projection. It localises to the microvillus. The protein localises to the uropodium. Its subcellular location is the nucleus. The protein resides in the PML body. Predominant cell surface sialoprotein of leukocytes which regulates multiple T-cell functions, including T-cell activation, proliferation, differentiation, trafficking and migration. Positively regulates T-cell trafficking to lymph-nodes via its association with ERM proteins (EZR, RDX and MSN). Negatively regulates Th2 cell differentiation and predisposes the differentiation of T-cells towards a Th1 lineage commitment. Promotes the expression of IFN-gamma by T-cells during T-cell receptor (TCR) activation of naive cells and induces the expression of IFN-gamma by CD4(+) T-cells and to a lesser extent by CD8(+) T-cells. Plays a role in preparing T-cells for cytokine sensing and differentiation into effector cells by inducing the expression of cytokine receptors IFNGR and IL4R, promoting IFNGR and IL4R signaling and by mediating the clustering of IFNGR with TCR. Acts as a major E-selectin ligand responsible for Th17 cell rolling on activated vasculature and recruitment during inflammation. Mediates Th17 cells, but not Th1 cells, adhesion to E-selectin. Acts as a T-cell counter-receptor for SIGLEC1. Its function is as follows. Protects cells from apoptotic signals, promoting cell survival. This Mus musculus (Mouse) protein is Leukosialin (Spn).